The chain runs to 60 residues: Sperm protamine P1 (60 aa).

Residues 1–60 (MARYRHSRSRSRSRYRRRRRRRSRYRSRRRRXRRRRRSRRGRRRRGYSRRRYSRRRRRRY) are disordered.

The protein belongs to the protamine P1 family. In terms of tissue distribution, testis.

Its subcellular location is the nucleus. It localises to the chromosome. Its function is as follows. Protamines substitute for histones in the chromatin of sperm during the haploid phase of spermatogenesis. They compact sperm DNA into a highly condensed, stable and inactive complex. This Petrogale concinna (Nabarlek) protein is Sperm protamine P1 (PRM1).